We begin with the raw amino-acid sequence, 141 residues long: Putative phosphatidylglycerol/phosphatidylinositol transfer protein DDB_G0278295 (141 aa).

An N-terminal signal peptide occupies residues 1 to 19 (MRLLLALFFVLALVSPSFT). Residues N82 and N104 are each glycosylated (N-linked (GlcNAc...) asparagine).

This sequence belongs to the NPC2 family. Monomer.

In terms of biological role, catalyzes the intermembrane transfer of phosphatidylglycerol and phosphatidylinositol. This Dictyostelium discoideum (Social amoeba) protein is Putative phosphatidylglycerol/phosphatidylinositol transfer protein DDB_G0278295.